A 388-amino-acid polypeptide reads, in one-letter code: Diacylglycerol O-acyltransferase 2 (388 aa).

Over 1-69 the chain is Cytoplasmic; that stretch reads MKTLIAAYSG…NRSKVEKHLQ (69 aa). Residues 70 to 88 traverse the membrane as a helical segment; it reads VISVLQWVLSFLVLGVACS. Residues 89 to 92 are Lumenal-facing; that stretch reads VILM. Residues 93–112 traverse the membrane as a helical segment; sequence YTFCTDCWLIAALYFTWLAF. Residues 113–388 are Cytoplasmic-facing; that stretch reads DWNTPKKGGR…LPETEVLEVN (276 aa).

The protein belongs to the diacylglycerol acyltransferase family. As to quaternary structure, forms multimeric complexes consisting of several DGAT2 subunits. Interacts with SLC27A1 and this interaction is enhanced in the presence of ZFYVE1.

Its subcellular location is the endoplasmic reticulum membrane. It localises to the lipid droplet. It is found in the cytoplasm. The protein localises to the perinuclear region. The catalysed reaction is an acyl-CoA + a 1,2-diacyl-sn-glycerol = a triacyl-sn-glycerol + CoA. The enzyme catalyses all-trans-retinol + an acyl-CoA = an all-trans-retinyl ester + CoA. It carries out the reaction 2-(9Z-octadecenoyl)-glycerol + (9Z)-octadecenoyl-CoA = 1,2-di-(9Z-octadecenoyl)-sn-glycerol + CoA. It catalyses the reaction 1,2-di-(9Z-octadecenoyl)-sn-glycerol + (9Z)-octadecenoyl-CoA = 1,2,3-tri-(9Z-octadecenoyl)-glycerol + CoA. The catalysed reaction is all-trans-retinol + hexadecanoyl-CoA = all-trans-retinyl hexadecanoate + CoA. The enzyme catalyses 1-O-(9Z-octadecenyl)-glycerol + (9Z)-octadecenoyl-CoA = 1-O-(9Z-octadecyl)-3-(9Z-octadecenoyl)-glycerol + CoA. It carries out the reaction 1-(9Z-octadecenoyl)-glycerol + (9Z)-octadecenoyl-CoA = 1,2-di-(9Z-octadecenoyl)-glycerol + CoA. It catalyses the reaction 1,2-di-(9Z-octadecenoyl)-sn-glycerol + hexadecanoyl-CoA = 1,2-di-(9Z)-octadecenoyl-3-hexadecanoyl-sn-glycerol + CoA. The catalysed reaction is 1,3-di-(9Z-octadecenoyl)-glycerol + (9Z)-octadecenoyl-CoA = 1,2,3-tri-(9Z-octadecenoyl)-glycerol + CoA. The enzyme catalyses 2,3-di-(9Z)-octadecenoyl-sn-glycerol + (9Z)-octadecenoyl-CoA = 1,2,3-tri-(9Z-octadecenoyl)-glycerol + CoA. It carries out the reaction 2-(9Z-octadecenoyl)-glycerol + hexadecanoyl-CoA = 1-hexadecanoyl-2-(9Z-octadecenoyl)-sn-glycerol + CoA. The protein operates within glycerolipid metabolism; triacylglycerol biosynthesis. With respect to regulation, inhibited by niacin. Its function is as follows. Essential acyltransferase that catalyzes the terminal and only committed step in triacylglycerol synthesis by using diacylglycerol and fatty acyl CoA as substrates. Required for synthesis and storage of intracellular triglycerides. Probably plays a central role in cytosolic lipid accumulation. In liver, is primarily responsible for incorporating endogenously synthesized fatty acids into triglycerides. Also functions as an acyl-CoA retinol acyltransferase (ARAT). Also able to use 1-monoalkylglycerol (1-MAkG) as an acyl acceptor for the synthesis of monoalkyl-monoacylglycerol (MAMAG). This chain is Diacylglycerol O-acyltransferase 2, found in Rattus norvegicus (Rat).